Here is a 104-residue protein sequence, read N- to C-terminus: uncharacterized protein (104 aa).

This is an uncharacterized protein from Escherichia coli (strain K12).